A 935-amino-acid polypeptide reads, in one-letter code: Protocadherin gamma-A11 (935 aa).

The first 29 residues, 1–29, serve as a signal peptide directing secretion; it reads MANRLQRGDRSRLLLLLCIFLGTLRGFRA. Cadherin domains are found at residues 30–134, 135–243, 244–348, 349–453, 454–563, and 571–677; these read RQIR…APSF, QEDE…IPMF, TQSV…APEI, TITS…PPVF, PHSS…APEI, and DGST…ADLG. Over 30–693 the chain is Extracellular; that stretch reads RQIRYSVPEE…NSEASDLSLY (664 aa). N-linked (GlcNAc...) asparagine glycosylation is present at Asn-48. Asn-255, Asn-266, Asn-420, and Asn-546 each carry an N-linked (GlcNAc...) asparagine glycan. A helical membrane pass occupies residues 694 to 714; the sequence is LVVAVAAVSCIFLVFVIVLLA. Over 715–935 the chain is Cytoplasmic; it reads LRLWRWHKSR…KKKSGKKEKK (221 aa). Disordered regions lie at residues 805-844 and 905-935; these read CDPT…WPNN and ATLT…KEKK. Positions 807–844 are enriched in polar residues; it reads PTSNQQAPPNTDWRFSQAQRPGTSGSQNGDDTGTWPNN. A compositionally biased stretch (basic residues) spans 925-935; sequence NKKKSGKKEKK.

It is found in the cell membrane. Its function is as follows. Potential calcium-dependent cell-adhesion protein. May be involved in the establishment and maintenance of specific neuronal connections in the brain. This chain is Protocadherin gamma-A11 (PCDHGA11), found in Pan troglodytes (Chimpanzee).